The sequence spans 179 residues: Auxin-responsive protein IAA15 (179 aa).

The EAR-like (transcriptional repression) signature appears at 21-25; that stretch reads LTLAL. In terms of domain architecture, PB1 spans 86 to 173; sequence RKYVKVALDG…SCKRMRLMKT (88 aa).

Belongs to the Aux/IAA family. Homodimers and heterodimers.

It localises to the nucleus. In terms of biological role, aux/IAA proteins are short-lived transcriptional factors that function as repressors of early auxin response genes at low auxin concentrations. Repression is thought to result from the interaction with auxin response factors (ARFs), proteins that bind to the auxin-responsive promoter element (AuxRE). Formation of heterodimers with ARF proteins may alter their ability to modulate early auxin response genes expression. The polypeptide is Auxin-responsive protein IAA15 (IAA15) (Arabidopsis thaliana (Mouse-ear cress)).